The chain runs to 216 residues: LexA repressor 1 (216 aa).

Positions 38–58 (TRQIGAAVGLRSMSSVARHLR) form a DNA-binding region, H-T-H motif. Residues S140 and K177 each act as for autocatalytic cleavage activity in the active site.

This sequence belongs to the peptidase S24 family. As to quaternary structure, homodimer.

The catalysed reaction is Hydrolysis of Ala-|-Gly bond in repressor LexA.. In terms of biological role, represses a number of genes involved in the response to DNA damage (SOS response), including recA and lexA. In the presence of single-stranded DNA, RecA interacts with LexA causing an autocatalytic cleavage which disrupts the DNA-binding part of LexA, leading to derepression of the SOS regulon and eventually DNA repair. The chain is LexA repressor 1 from Nocardia farcinica (strain IFM 10152).